The chain runs to 280 residues: Borealin (280 aa).

Residues 140–153 are compositionally biased toward basic residues; sequence KVAAKKPSTARRTR. The segment at 140 to 187 is disordered; that stretch reads KVAAKKPSTARRTRASVGNVANTSKRTSKRGRATPSASKQAETSLLGY.

It belongs to the borealin family. In terms of assembly, component of the CPC at least composed of survivin/birc5, incenp, cdca8/borealin and/or cdca9/dasra-A, and aurkb/aurora-B. Interacts with incenp (via N-terminus).

It localises to the nucleus. The protein resides in the chromosome. Its subcellular location is the centromere. It is found in the cytoplasm. The protein localises to the cytoskeleton. It localises to the spindle. Its function is as follows. Component of the chromosomal passenger complex (CPC), a complex that acts as a key regulator of mitosis. The CPC complex has essential functions at the centromere in ensuring correct chromosome alignment and segregation and is required for chromatin-induced microtubule stabilization and spindle assembly. Contributes to CPC function by facilitating loading of the CPC onto chromosomes. The chain is Borealin (cdca8) from Xenopus laevis (African clawed frog).